Reading from the N-terminus, the 80-residue chain is Saposin-B-Val (80 aa).

The Saposin B-type domain maps to 1 to 80; that stretch reads GDVCQDCIQM…CGLVGFCEEV (80 aa). Intrachain disulfides connect Cys4–Cys77, Cys7–Cys71, and Cys36–Cys47. Asn21 carries an N-linked (GlcNAc...) (complex) asparagine glycan.

In terms of assembly, saposin-B is a homodimer. Interacts with GRN; facilitates lysosomal delivery of progranulin from the extracellular space and the biosynthetic pathway. In terms of processing, the one residue extended Saposin-B-Val is only found in a minority of the chains.

Its function is as follows. Saposin-B stimulates the hydrolysis of galacto-cerebroside sulfate by arylsulfatase A (EC 3.1.6.8), GM1 gangliosides by beta-galactosidase (EC 3.2.1.23) and globotriaosylceramide by alpha-galactosidase A (EC 3.2.1.22). Saposin-B forms a solubilizing complex with the substrates of the sphingolipid hydrolases. The sequence is that of Saposin-B-Val (PSAP) from Sus scrofa (Pig).